We begin with the raw amino-acid sequence, 1203 residues long: Nitric oxide synthase 3 (1203 aa).

The interval 1–71 is disordered; sequence MGNLKSVAQE…PPEGPKFPRV (71 aa). Residue Gly-2 is the site of N-myristoyl glycine attachment. 2 S-palmitoyl cysteine lipidation sites follow: Cys-15 and Cys-26. Over residues 15–27 the composition is skewed to gly residues; the sequence is CGLGLGLGLGLCG. Phosphothreonine is present on Thr-33. Residues 33–66 are compositionally biased toward pro residues; that stretch reads TPAPEPSRAPASLLPPAPEHSPPSSPLTQPPEGP. Zn(2+) is bound by residues Cys-94 and Cys-99. An interaction with NOSIP region spans residues 98-486; sequence RCLGSLVFPR…PDPWKGSAAK (389 aa). Residue Ser-102 coordinates (6R)-L-erythro-5,6,7,8-tetrahydrobiopterin. Position 114 is a phosphoserine; by CDK5 (Ser-114). Cys-184 is a heme b binding site. L-arginine-binding residues include Gln-247, Trp-356, Tyr-357, and Glu-361. Arg-365 provides a ligand contact to (6R)-L-erythro-5,6,7,8-tetrahydrobiopterin. Asn-366 provides a ligand contact to L-arginine. 3 residues coordinate (6R)-L-erythro-5,6,7,8-tetrahydrobiopterin: Ala-446, Trp-447, and Phe-460. Heme b is bound at residue Tyr-475. Positions 491–510 are calmodulin-binding; sequence TRKKTFKEVANAVKISASLM. Phosphothreonine; by AMPK is present on Thr-495. The Flavodoxin-like domain maps to 520–703; it reads ATILYGSETG…AFRGWAQAAF (184 aa). FMN contacts are provided by Ser-526, Glu-527, Thr-528, Arg-530, Ser-572, and Thr-573. Phosphoserine occurs at positions 615, 633, and 638. FMN contacts are provided by Ser-654, Cys-661, Glu-687, and Gln-691. The 247-residue stretch at 756-1002 folds into the FAD-binding FR-type domain; it reads RKMFQATIRS…IRGAPSFRLP (247 aa). Residue Arg-776 participates in NADP(+) binding. His-798 contacts FAD. At Ser-836 the chain carries Phosphoserine. Residues Arg-938, Tyr-940, Ser-941, Thr-956, Ala-958, Tyr-962, Val-975, Cys-976, and Ser-977 each coordinate FAD. Residues Thr-1016, Arg-1049, Ser-1078, Arg-1079, Lys-1085, Tyr-1087, and Gln-1089 each contribute to the NADP(+) site. Thr-1175 carries the phosphothreonine modification. Ser-1177 is subject to Phosphoserine; by AMPK. Ser-1179 is subject to Phosphoserine.

Belongs to the NOS family. Homodimer. Interacts with NOSIP and NOSTRIN. Interacts with HSP90AB1. Forms a complex with ASL, ASS1 and SLC7A1; the complex regulates cell-autonomous L-arginine synthesis and citrulline recycling while channeling extracellular L-arginine to nitric oxide synthesis pathway. It depends on heme b as a cofactor. FAD serves as cofactor. The cofactor is FMN. (6R)-L-erythro-5,6,7,8-tetrahydrobiopterin is required as a cofactor. Phosphorylation by AMPK at Ser-1177 in the presence of Ca(2+)-calmodulin (CaM) activates activity. In absence of Ca(2+)-calmodulin, AMPK also phosphorylates Thr-495, resulting in inhibition of activity. Phosphorylation of Ser-114 by CDK5 reduces activity. Platelets, placenta, liver and kidney.

The protein resides in the cell membrane. It is found in the membrane. Its subcellular location is the caveola. It localises to the cytoplasm. The protein localises to the cytoskeleton. The protein resides in the golgi apparatus. The enzyme catalyses 2 L-arginine + 3 NADPH + 4 O2 + H(+) = 2 L-citrulline + 2 nitric oxide + 3 NADP(+) + 4 H2O. Stimulated by calcium/calmodulin. Inhibited by NOSIP and NOSTRIN. Functionally, produces nitric oxide (NO) which is implicated in vascular smooth muscle relaxation through a cGMP-mediated signal transduction pathway. NO mediates vascular endothelial growth factor (VEGF)-induced angiogenesis in coronary vessels and promotes blood clotting through the activation of platelets. Lacks eNOS activity, dominant-negative form that may down-regulate eNOS activity by forming heterodimers with isoform 1. This Homo sapiens (Human) protein is Nitric oxide synthase 3.